The chain runs to 169 residues: ATP synthase subunit b (169 aa).

The helical transmembrane segment at leucine 13–phenylalanine 33 threads the bilayer.

It belongs to the ATPase B chain family. In terms of assembly, F-type ATPases have 2 components, F(1) - the catalytic core - and F(0) - the membrane proton channel. F(1) has five subunits: alpha(3), beta(3), gamma(1), delta(1), epsilon(1). F(0) has three main subunits: a(1), b(2) and c(10-14). The alpha and beta chains form an alternating ring which encloses part of the gamma chain. F(1) is attached to F(0) by a central stalk formed by the gamma and epsilon chains, while a peripheral stalk is formed by the delta and b chains.

It is found in the cell inner membrane. F(1)F(0) ATP synthase produces ATP from ADP in the presence of a proton or sodium gradient. F-type ATPases consist of two structural domains, F(1) containing the extramembraneous catalytic core and F(0) containing the membrane proton channel, linked together by a central stalk and a peripheral stalk. During catalysis, ATP synthesis in the catalytic domain of F(1) is coupled via a rotary mechanism of the central stalk subunits to proton translocation. In terms of biological role, component of the F(0) channel, it forms part of the peripheral stalk, linking F(1) to F(0). This chain is ATP synthase subunit b, found in Endomicrobium trichonymphae.